Reading from the N-terminus, the 365-residue chain is Alanine racemase (365 aa).

Lys-35 serves as the catalytic Proton acceptor; specific for D-alanine. Lys-35 carries the post-translational modification N6-(pyridoxal phosphate)lysine. Arg-130 lines the substrate pocket. The active-site Proton acceptor; specific for L-alanine is the Tyr-256. Met-304 provides a ligand contact to substrate.

Belongs to the alanine racemase family. Pyridoxal 5'-phosphate is required as a cofactor.

It carries out the reaction L-alanine = D-alanine. It functions in the pathway amino-acid biosynthesis; D-alanine biosynthesis; D-alanine from L-alanine: step 1/1. Functionally, catalyzes the interconversion of L-alanine and D-alanine. May also act on other amino acids. This chain is Alanine racemase (alr), found in Acidovorax sp. (strain JS42).